The primary structure comprises 393 residues: MSKSNPSEVKLAVPTSGGFSGLKSLNLQVFVMIAAIIAIMLFFTWTTDGAYLSARNVSNLLRQTAITGILAVGMVFVIISAEIDLSVGSMMGLLGGVAAICDVWLGWPLPLTIIVTLVLGLLLGAWNGWWVAYRKVPSFIVTLAGMLAFRGILIGITNGTTVSPTSAAMSQIGQSYLPASTGFIIGALGLMAFVGWQWRGRMRRQALGLQSPASTAVVGRQALTAIIVLGAIWLLNDYRGVPTPVLLLTLLLLGGMFMATRTAFGRRIYAIGGNLEAARLSGINVERTKLAVFAINGLMVAIAGLILSSRLGAGSPSAGNIAELDAIAACVIGGTSLAGGVGSVAGAVMGAFIMASLDNGMSMMDVPTFWQYIVKGAILLLAVWMDSATKRRS.

Residues 1-24 (MSKSNPSEVKLAVPTSGGFSGLKS) lie on the Periplasmic side of the membrane. The chain crosses the membrane as a helical span at residues 25–45 (LNLQVFVMIAAIIAIMLFFTW). The Cytoplasmic portion of the chain corresponds to 46–64 (TTDGAYLSARNVSNLLRQT). A helical transmembrane segment spans residues 65 to 85 (AITGILAVGMVFVIISAEIDL). Over 86 to 102 (SVGSMMGLLGGVAAICD) the chain is Periplasmic. The chain crosses the membrane as a helical span at residues 103–123 (VWLGWPLPLTIIVTLVLGLLL). Residues 124–135 (GAWNGWWVAYRK) are Cytoplasmic-facing. A helical membrane pass occupies residues 136-156 (VPSFIVTLAGMLAFRGILIGI). Residues 157–175 (TNGTTVSPTSAAMSQIGQS) are Periplasmic-facing. The helical transmembrane segment at 176–196 (YLPASTGFIIGALGLMAFVGW) threads the bilayer. The Cytoplasmic segment spans residues 197–214 (QWRGRMRRQALGLQSPAS). A helical membrane pass occupies residues 215–235 (TAVVGRQALTAIIVLGAIWLL). Topologically, residues 236–239 (NDYR) are periplasmic. Residues 240-260 (GVPTPVLLLTLLLLGGMFMAT) form a helical membrane-spanning segment. Over 261 to 287 (RTAFGRRIYAIGGNLEAARLSGINVER) the chain is Cytoplasmic. Residues 288-308 (TKLAVFAINGLMVAIAGLILS) form a helical membrane-spanning segment. The Periplasmic segment spans residues 309–312 (SRLG). A helical membrane pass occupies residues 313-333 (AGSPSAGNIAELDAIAACVIG). Topologically, residues 334–336 (GTS) are cytoplasmic. A helical membrane pass occupies residues 337 to 357 (LAGGVGSVAGAVMGAFIMASL). Topologically, residues 358-365 (DNGMSMMD) are periplasmic. The chain crosses the membrane as a helical span at residues 366–386 (VPTFWQYIVKGAILLLAVWMD). Over 387 to 393 (SATKRRS) the chain is Cytoplasmic.

Belongs to the binding-protein-dependent transport system permease family. AraH/RbsC subfamily.

It is found in the cell inner membrane. Part of the binding-protein-dependent transport system for D-xylose. Probably responsible for the translocation of the substrate across the membrane. The chain is Xylose transport system permease protein XylH (xylH) from Escherichia coli O6:H1 (strain CFT073 / ATCC 700928 / UPEC).